The following is a 269-amino-acid chain: Tryptophan synthase alpha chain (269 aa).

Catalysis depends on proton acceptor residues Glu50 and Asp61.

This sequence belongs to the TrpA family. In terms of assembly, tetramer of two alpha and two beta chains.

The enzyme catalyses (1S,2R)-1-C-(indol-3-yl)glycerol 3-phosphate + L-serine = D-glyceraldehyde 3-phosphate + L-tryptophan + H2O. It functions in the pathway amino-acid biosynthesis; L-tryptophan biosynthesis; L-tryptophan from chorismate: step 5/5. Functionally, the alpha subunit is responsible for the aldol cleavage of indoleglycerol phosphate to indole and glyceraldehyde 3-phosphate. This chain is Tryptophan synthase alpha chain, found in Buchnera aphidicola subsp. Baizongia pistaciae (strain Bp).